A 108-amino-acid chain; its full sequence is UPF0060 membrane protein RER_49640 (108 aa).

The next 4 helical transmembrane spans lie at 8-28 (LLFV…WQGI), 33-53 (GWIW…VATM), 62-82 (ILAA…VVMD), and 87-107 (DRFD…IMYA).

It belongs to the UPF0060 family.

It is found in the cell membrane. This Rhodococcus erythropolis (strain PR4 / NBRC 100887) protein is UPF0060 membrane protein RER_49640.